A 323-amino-acid chain; its full sequence is Ankyrin repeat and SOCS box protein 11 (323 aa).

ANK repeat units follow at residues 64 to 93 (ADRS…NVNL), 97 to 126 (NRVS…HVNG), 130 to 159 (HGAT…KAQL), 162 to 191 (HLAS…NIDQ), 195 to 224 (HLGT…NVNH), and 227 to 256 (WLDT…NLKC). The 51-residue stretch at 273–323 (SVEQALLLREGPPALSQLCRLCVRKCLGRNCHKTIHKLYLPDPLEKFLLYQ) folds into the SOCS box domain.

The protein belongs to the ankyrin SOCS box (ASB) family. In terms of assembly, substrate-recognition component of the ECS(ASB11) complex, composed of ASB11, CUL5, ELOB, ELOC and RNF7/RBX2.

The protein resides in the endoplasmic reticulum. It functions in the pathway protein modification; protein ubiquitination. Its function is as follows. Substrate-recognition component of a cullin-5-RING E3 ubiquitin-protein ligase complex (ECS complex, also named CRL5 complex), which mediates the ubiquitination and subsequent proteasomal degradation of target proteins, such as BIK, DIRAS2 and RPN1. The ECS(ASB11) complex acts as a regulator of the endoplasmic reticulum unfolded protein response by mediating ubiquitination and degradation of BIK. This chain is Ankyrin repeat and SOCS box protein 11 (ASB11), found in Bos taurus (Bovine).